A 419-amino-acid polypeptide reads, in one-letter code: MAEAGVEILCVGTELLLGDILNGNARWIAERLAGLGLPHYRQTVVGDNRQRLAAAAREASGRCRVLITTGGLGPTPDDLTTESLAAAFETPLEERPELWDEIQANLSAGGRAVAPSNRRQAFLPRGAAVLPNPLGSAPGMIWSPLPDFTILTFPGVPSEMRAMFEATAEPWLRRHGGATGVFVSRLLRFSGIGESNLAEQVADLLEGVNPTVAPYASLGDVKLRLTACGSSAESAAALLDPVEAELRRRTAQHCYGTTDDSLASVVLALLQRSGQTLSVAESCTGGGLGAALTAVPGSSAVFAGGVIAYSNAVKQQLLDVPAELLERHGAVSDPVVAAMAEGARQRLGTDWSIAVSGIAGPGGGTDEKPVGLVHLAVSGPDGCEATAERFGDRRGRGAVQQLTVIRALDRLRRRLLAQS.

This sequence belongs to the CinA family.

The polypeptide is CinA-like protein (Parasynechococcus marenigrum (strain WH8102)).